The primary structure comprises 607 residues: Elongation factor 4 (607 aa).

Positions 11–193 (SKIRNFSIIA…QIVEKVPAPA (183 aa)) constitute a tr-type G domain. GTP is bound by residues 23–28 (DHGKST) and 140–143 (NKID).

It belongs to the TRAFAC class translation factor GTPase superfamily. Classic translation factor GTPase family. LepA subfamily.

The protein resides in the cell membrane. It catalyses the reaction GTP + H2O = GDP + phosphate + H(+). Functionally, required for accurate and efficient protein synthesis under certain stress conditions. May act as a fidelity factor of the translation reaction, by catalyzing a one-codon backward translocation of tRNAs on improperly translocated ribosomes. Back-translocation proceeds from a post-translocation (POST) complex to a pre-translocation (PRE) complex, thus giving elongation factor G a second chance to translocate the tRNAs correctly. Binds to ribosomes in a GTP-dependent manner. The sequence is that of Elongation factor 4 from Bacillus cereus (strain ATCC 14579 / DSM 31 / CCUG 7414 / JCM 2152 / NBRC 15305 / NCIMB 9373 / NCTC 2599 / NRRL B-3711).